The chain runs to 730 residues: Dual function macrocyclase-peptidase POPB (730 aa).

The disordered stretch occupies residues 1–34; sequence MSSVTWAPGNYPSTRRSDHVDTYQSASKGEVPVP. Residues serine 577, aspartate 661, and histidine 698 each act as charge relay system in the active site.

This sequence belongs to the peptidase S9A family. Monomer.

It carries out the reaction Hydrolysis of Pro-|-Xaa &gt;&gt; Ala-|-Xaa in oligopeptides.. In terms of biological role, dual function macrocyclase-peptidase involved in the biosynthesis of the highly toxic amanitin toxin family of macrocycles. Cleaves peptide bonds on the C-terminal side of prolyl residues. The enzyme first removes 10 residues from the N-terminus of a 35-residue substrate. Conformational trapping of the 25 amino-acid peptide forces the enzyme to release this intermediate rather than proceed to macrocyclization. The enzyme rebinds the 25 amino-acid peptide in a different conformation and catalyzes macrocyclization of the N-terminal eight residues. The protein is Dual function macrocyclase-peptidase POPB of Galerina marginata (strain CBS 339.88).